The sequence spans 178 residues: ATP synthase subunit b, chloroplastic (178 aa).

The helical transmembrane segment at 23–43 (IFETNIINLAAVVAIVISFVG) threads the bilayer.

Belongs to the ATPase B chain family. F-type ATPases have 2 components, F(1) - the catalytic core - and F(0) - the membrane proton channel. F(1) has five subunits: alpha(3), beta(3), gamma(1), delta(1), epsilon(1). F(0) has four main subunits: a(1), b(1), b'(1) and c(10-14). The alpha and beta chains form an alternating ring which encloses part of the gamma chain. F(1) is attached to F(0) by a central stalk formed by the gamma and epsilon chains, while a peripheral stalk is formed by the delta, b and b' chains.

The protein localises to the plastid. It localises to the chloroplast thylakoid membrane. Functionally, f(1)F(0) ATP synthase produces ATP from ADP in the presence of a proton or sodium gradient. F-type ATPases consist of two structural domains, F(1) containing the extramembraneous catalytic core and F(0) containing the membrane proton channel, linked together by a central stalk and a peripheral stalk. During catalysis, ATP synthesis in the catalytic domain of F(1) is coupled via a rotary mechanism of the central stalk subunits to proton translocation. In terms of biological role, component of the F(0) channel, it forms part of the peripheral stalk, linking F(1) to F(0). The chain is ATP synthase subunit b, chloroplastic from Tetradesmus obliquus (Green alga).